The sequence spans 264 residues: uncharacterized protein (264 aa).

A helical membrane pass occupies residues 182–198; sequence TVTGVSNALGFIIAALL.

It to E.coli YjiC.

Its subcellular location is the membrane. This is an uncharacterized protein from Escherichia coli (strain K12).